The following is a 131-amino-acid chain: Small ribosomal subunit protein uS11 (131 aa).

The protein belongs to the universal ribosomal protein uS11 family. In terms of assembly, part of the 30S ribosomal subunit. Interacts with proteins S7 and S18. Binds to IF-3.

Functionally, located on the platform of the 30S subunit, it bridges several disparate RNA helices of the 16S rRNA. Forms part of the Shine-Dalgarno cleft in the 70S ribosome. The protein is Small ribosomal subunit protein uS11 of Thermotoga neapolitana (strain ATCC 49049 / DSM 4359 / NBRC 107923 / NS-E).